Consider the following 740-residue polypeptide: MFNEILKKVDWHGNVLSLSTGKIARNADGAVLASMGNTSVLCTVVFDKNTKKDMDFFPLGVYYREMAYAAGKIPGGFIKKEGKFSEYEVLVSRLIDRSIRPLFDSNFRNDTQIICTVMSYDPRYSPDILAIIGSSAALAISGIPIVKPIGAARVGIVNDEFILNPVIHDNTGVNELDLVVAATFDSVTMIEAQACEIDEEKMLAAIEFGYKSLKPVINAIEEIKSSIRKDIFEVTARPHLRYNDEILKHFSSDIKSALLLQTKNERNQQLQLIQQKVIDYFSSKANSEANDGDDILNIEKALDDAKSKIFRDLVLQNKTRIGNRAVDEIRPIICEAGLFNTVHGSALFTRGDTQSLATITLGSSTDEQIVEQLNKCERQNFLLDYIFLPYSVGEISPLRAASRREIGHGWLAKKAIQLVIPSKDVFPYTIRIVSEITQSDGSSSMATVCSASLSLMEAGVPIKTHVAGIAMGLVLGEGNKFEILSDISGCEDHLGDMDFKVASTKNGITALQLDIKVQGINLSMIESTFRQAKIGINHILNVMNNTISCPKSELSTYAPMVQTLEIQKEKIRDVIGLGGKVIKELCKTFDVEIDISENGEVKVWGNVGENVKKAVQSIENIVFVPQIGDIFDGEVVKVIESGAFIKYVTGRDGFVHISEINDTHIKDINAHVKLGDKVKVKIIGIDHKNRVKLTLRTDKEHCKNKNEQYNDITTTTGGVKKKIKIAPKEAAVISNRKYFD.

The Mg(2+) site is built by Asp492 and Asp498. Residues 559 to 618 (PMVQTLEIQKEKIRDVIGLGGKVIKELCKTFDVEIDISENGEVKVWGNVGENVKKAVQSI) enclose the KH domain. An S1 motif domain is found at 628-696 (GDIFDGEVVK…HKNRVKLTLR (69 aa)).

Belongs to the polyribonucleotide nucleotidyltransferase family. Requires Mg(2+) as cofactor.

The protein resides in the cytoplasm. The enzyme catalyses RNA(n+1) + phosphate = RNA(n) + a ribonucleoside 5'-diphosphate. Involved in mRNA degradation. Catalyzes the phosphorolysis of single-stranded polyribonucleotides processively in the 3'- to 5'-direction. This Orientia tsutsugamushi (strain Boryong) (Rickettsia tsutsugamushi) protein is Polyribonucleotide nucleotidyltransferase.